A 123-amino-acid chain; its full sequence is Large ribosomal subunit protein bL12 (123 aa).

Belongs to the bacterial ribosomal protein bL12 family. Homodimer. Part of the ribosomal stalk of the 50S ribosomal subunit. Forms a multimeric L10(L12)X complex, where L10 forms an elongated spine to which 2 to 4 L12 dimers bind in a sequential fashion. Binds GTP-bound translation factors.

Its function is as follows. Forms part of the ribosomal stalk which helps the ribosome interact with GTP-bound translation factors. Is thus essential for accurate translation. The polypeptide is Large ribosomal subunit protein bL12 (Clostridium acetobutylicum (strain ATCC 824 / DSM 792 / JCM 1419 / IAM 19013 / LMG 5710 / NBRC 13948 / NRRL B-527 / VKM B-1787 / 2291 / W)).